The following is a 406-amino-acid chain: Probable endo-xylogalacturonan hydrolase A (406 aa).

Residues 1 to 18 form the signal peptide; that stretch reads MISLNSIFLLSLVGLSRA. The tract at residues 20-49 is disordered; sequence PSRSETSPDRTIKPRAACTPTAGGSSSTDD. 6 PbH1 repeats span residues 183 to 213, 214 to 235, 237 to 257, 266 to 289, 299 to 320, and 368 to 390; these read TSNA…DIGA, STYV…AFKP, ANYV…SVGS, VQNV…KTYP, VKNA…QIQS, and TCDV…ILCG. Aspartate 228 acts as the Proton donor in catalysis. The N-linked (GlcNAc...) asparagine glycan is linked to asparagine 244. The active site involves histidine 251. N-linked (GlcNAc...) asparagine glycans are attached at residues asparagine 273, asparagine 278, and asparagine 301.

It belongs to the glycosyl hydrolase 28 family.

It is found in the secreted. Its function is as follows. Pectinolytic enzyme involved in the degradation of xylogalacturonan (xga), a galacturonan backbone heavily substituted with xylose, and which is one important component of the hairy regions of pectin. Activity requires a galacturonic acid backbone substituted with xylose. The polypeptide is Probable endo-xylogalacturonan hydrolase A (xghA) (Aspergillus oryzae (strain ATCC 42149 / RIB 40) (Yellow koji mold)).